We begin with the raw amino-acid sequence, 487 residues long: Cyclic AMP-dependent transcription factor ATF-2 (487 aa).

The C2H2-type zinc-finger motif lies at 7–31; the sequence is FLCTAPGCGQRFTNEDHLAVHKHKH. Thr-34 carries the post-translational modification Phosphothreonine; by PKC/PRKCH. Phosphoserine is present on Ser-44. Thr-51 is modified (phosphothreonine; by MAPK11 and MAPK14). Residue Thr-53 is modified to Phosphothreonine; by MAPK1, MAPK3, MAPK11, MAPK12, MAPK14 and PLK3. Thr-55 carries the post-translational modification Phosphothreonine; by VRK1. A phosphoserine mark is found at Ser-72 and Ser-94. Thr-98 is modified (phosphothreonine). Position 103 is a phosphoserine; by PKC/PRKCA and PKC/PRKCB (Ser-103). Disordered stretches follow at residues 106–137 and 241–355; these read EEPS…PLAQ and PGIP…RQKR. The residue at position 118 (Ser-118) is a Phosphoserine. Residues 264–275 are compositionally biased toward polar residues; sequence LTQQHPPVTNGD. The segment at 278–281 is essential for its histone acetyltransferase activity; it reads KGHG. Residues 300-316 are compositionally biased toward low complexity; the sequence is PATSTTETPASPAHTTP. Ser-310 bears the Phosphoserine mark. Residue Ser-322 is modified to Phosphoserine; by PKC/PRKCA and PKC/PRKCB. Basic and acidic residues predominate over residues 328–345; it reads AANEDPDEKRRKFLERNR. The 64-residue stretch at 334–397 folds into the bZIP domain; sequence DEKRRKFLER…AQLKQLLLAH (64 aa). The tract at residues 336–356 is basic motif; that stretch reads KRRKFLERNRAAASRCRQKRK. Lys-339 carries the post-translational modification N6-acetyllysine. Position 349 is a phosphoserine; by PKC/PRKCA and PKC/PRKCB (Ser-349). Residue Lys-356 is modified to N6-acetyllysine. The interval 362–390 is leucine-zipper; it reads LEKKAEDLSSLNGQLQSEVTLLRNEVAQL. The short motif at 387 to 396 is the Nuclear export signal element; that stretch reads VAQLKQLLLA. Residues 407 to 453 are disordered; sequence KKSGYHTADKDDSSEDLSVPSSPHTEAIQHSSVSTSNGVSSTSKAEA. Ser-424 and Ser-428 each carry phosphoserine. Over residues 425–436 the composition is skewed to polar residues; that stretch reads VPSSPHTEAIQH. The span at 437–449 shows a compositional bias: low complexity; it reads SSVSTSNGVSSTS. A phosphoserine; by ATM mark is found at Ser-472 and Ser-480.

This sequence belongs to the bZIP family. ATF subfamily. As to quaternary structure, binds DNA as a dimer and can form a homodimer in the absence of DNA. Can form a heterodimer with JUN. Heterodimerization is essential for its transcriptional activity. Interacts with SMAD3 and SMAD4. Interacts with the HK1/VDAC1 complex. Interacts with NBN, MRE11, XPO1, KAT5 and CUL3. Binds through its N-terminal region to UTF1 which acts as a coactivator of ATF2 transcriptional activity. Phosphorylation of Thr-51 by MAPK14 and MAPK11, and at Thr-53 by MAPK1/ERK2, MAPK3/ERK1, MAPK11, MAPK12 and MAPK14 in response to external stimulus like insulin causes increased transcriptional activity. Phosphorylated by PLK3 following hyperosmotic stress. Also phosphorylated and activated by JNK and CaMK4. ATM-mediated phosphorylation at Ser-472 and Ser-480 stimulates its function in DNA damage response. Phosphorylation at Ser-44, Thr-55 and Ser-103 activates its transcriptional activity. Phosphorylation at Thr-51 or Thr-53 enhances acetylation of histones H2B and H4.

Its subcellular location is the nucleus. The protein localises to the cytoplasm. It is found in the mitochondrion outer membrane. Transcriptional activator which regulates the transcription of various genes, including those involved in anti-apoptosis, cell growth, and DNA damage response. Dependent on its binding partner, binds to CRE (cAMP response element) consensus sequences (5'-TGACGTCA-3') or to AP-1 (activator protein 1) consensus sequences (5'-TGACTCA-3'). In the nucleus, contributes to global transcription and the DNA damage response, in addition to specific transcriptional activities that are related to cell development, proliferation and death. In the cytoplasm, interacts with and perturbs HK1- and VDAC1-containing complexes at the mitochondrial outer membrane, thereby impairing mitochondrial membrane potential, inducing mitochondrial leakage and promoting cell death. The phosphorylated form (mediated by ATM) plays a role in the DNA damage response and is involved in the ionizing radiation (IR)-induced S phase checkpoint control and in the recruitment of the MRN complex into the IR-induced foci (IRIF). Exhibits histone acetyltransferase (HAT) activity which specifically acetylates histones H2B and H4 in vitro. In concert with CUL3 and RBX1, promotes the degradation of KAT5 thereby attenuating its ability to acetylate and activate ATM. Can elicit oncogenic or tumor suppressor activities depending on the tissue or cell type. In Mus musculus (Mouse), this protein is Cyclic AMP-dependent transcription factor ATF-2 (Atf2).